The sequence spans 112 residues: MTPLAERLKHLSSAEDFLQFFGVPFDQKVVDVCRLHILKRFFQYIRQQASIPQDTEAALFATYRDQLARAYRDFVASTPAEEKVFKVFQDVDGRQHVSVDTLRASLPARGTA.

It belongs to the NifW family. As to quaternary structure, homotrimer; associates with NifD.

Its function is as follows. May protect the nitrogenase Fe-Mo protein from oxidative damage. The polypeptide is Nitrogenase-stabilizing/protective protein NifW (Burkholderia vietnamiensis (strain G4 / LMG 22486) (Burkholderia cepacia (strain R1808))).